Here is a 37-residue protein sequence, read N- to C-terminus: Large ribosomal subunit protein bL36 (37 aa).

The protein belongs to the bacterial ribosomal protein bL36 family.

In Mesomycoplasma hyopneumoniae (strain 7448) (Mycoplasma hyopneumoniae), this protein is Large ribosomal subunit protein bL36.